Reading from the N-terminus, the 434-residue chain is ATP-dependent RNA helicase uap56 (434 aa).

The tract at residues 1 to 43 (MASAQEDLIDYEEEEELVQDQPAQEITPAADTAENGEKSDKKG) is disordered. The span at 7-18 (DLIDYEEEEELV) shows a compositional bias: acidic residues. A Q motif motif is present at residues 51-79 (TGFRDFLLKPELLRAITDSGFEHPSEVQQ). Residues 82-257 (IPQSILGTDV…KKFMQNPLEI (176 aa)) enclose the Helicase ATP-binding domain. 95 to 102 (AKSGMGKT) serves as a coordination point for ATP. The DECD box motif lies at 204–207 (DECD). The Helicase C-terminal domain maps to 269–430 (GLQQHYVKLE…ELPDEIDVGS (162 aa)).

This sequence belongs to the DEAD box helicase family. DECD subfamily. As to quaternary structure, interacts with mlo3 and rae1.

The protein resides in the nucleus. It carries out the reaction ATP + H2O = ADP + phosphate + H(+). ATP-binding RNA helicase involved in transcription elongation and required for the export of mRNA out of the nucleus. SUB2 also plays a role in pre-mRNA splicing and spliceosome assembly. May be involved in rDNA and telomeric silencing, and maintenance of genome integrity. Links the mRNA adapter mlo3 to rae1 for targeting mRNA-protein complex to the proteins of the nucleoporin complex (NPC). The protein is ATP-dependent RNA helicase uap56 (uap56) of Schizosaccharomyces pombe (strain 972 / ATCC 24843) (Fission yeast).